Consider the following 963-residue polypeptide: Pyruvate, phosphate dikinase 1, chloroplastic (963 aa).

The transit peptide at Met1–Ala76 directs the protein to the chloroplast. A Phosphothreonine; by PDRP1 modification is found at Thr543. Catalysis depends on His545, which acts as the Tele-phosphohistidine intermediate. 7 residues coordinate substrate: Arg651, Arg707, Glu836, Gly857, Thr858, Asn859, and Asp860. Glu836 provides a ligand contact to Mg(2+). Asp860 serves as a coordination point for Mg(2+). Residue Cys922 is the Proton donor of the active site.

It belongs to the PEP-utilizing enzyme family. As to quaternary structure, homotetramer. Interacts with RP1 and RP2. Mg(2+) is required as a cofactor. Phosphorylation of Thr-543 in the dark inactivates the enzyme. Dephosphorylation upon light stimulation reactivates the enzyme. In terms of tissue distribution, isoform 1 is expressed in leaves, flowers and siliques. Isoform 2 is found in cotyledons, rosette and cauline leaves, petioles, flowers and siliques.

The protein resides in the plastid. The protein localises to the chloroplast. It is found in the cytoplasm. The catalysed reaction is pyruvate + phosphate + ATP = phosphoenolpyruvate + AMP + diphosphate + H(+). With respect to regulation, activated by light-induced dephosphorylation. Inhibited by dark-induced phosphorylation. Both reactions are catalyzed by PDRP1. In terms of biological role, formation of phosphoenolpyruvate. May be involved in regulating the flux of carbon into starch and fatty acids of seeds and in the remobilization of nitrogen reserves in senescing leaves. The polypeptide is Pyruvate, phosphate dikinase 1, chloroplastic (PPDK) (Arabidopsis thaliana (Mouse-ear cress)).